The following is a 78-amino-acid chain: Large ribosomal subunit protein bL28 (78 aa).

The protein belongs to the bacterial ribosomal protein bL28 family.

The protein is Large ribosomal subunit protein bL28 of Acinetobacter baylyi (strain ATCC 33305 / BD413 / ADP1).